The sequence spans 165 residues: ADP-ribosylation factor-like protein 3 (165 aa).

Gly-2 is lipidated: N-myristoyl glycine. The residue at position 5 (Ser-5) is a Phosphoserine. GTP is bound by residues 24–31 (GLDNAGKT), 67–71 (DIGGQ), and 109–112 (NKQD).

The protein belongs to the small GTPase superfamily. Arf family. Found in a complex with ARL3, RP2 and UNC119 (or UNC119B); RP2 induces hydrolysis of GTP ARL3 in the complex, leading to the release of UNC119 (or UNC119B). Interacts with RP2; interaction is direct and stimulated with the activated GTP-bound form of ARL3. Interacts with SYS1. Interacts with ARL2BP; the GTP-bound form interacts with ARL2BP. Microtubule-associated protein. Does not interact with TBCC. Interacts with RP2. Interacts with PDE6D; the interaction occurs specifically with the GTP-bound form of ARL3. Interacts with GGA1; the interaction recruits PKD1:PKD2 complex to trans-Golgi network and is required for ciliary targeting of PKD1:PKD2 complex. Interacts with DNAAF9.

Its subcellular location is the golgi apparatus membrane. It is found in the cytoplasm. It localises to the cytoskeleton. The protein localises to the spindle. The protein resides in the nucleus. Its subcellular location is the microtubule organizing center. It is found in the centrosome. It localises to the cell projection. The protein localises to the cilium. Small GTP-binding protein which cycles between an inactive GDP-bound and an active GTP-bound form, and the rate of cycling is regulated by guanine nucleotide exchange factors (GEF) and GTPase-activating proteins (GAP). Required for normal cytokinesis and cilia signaling. Requires assistance from GTPase-activating proteins (GAPs) like RP2 and PDE6D, in order to cycle between inactive GDP-bound and active GTP-bound forms. Required for targeting proteins to the cilium, including myristoylated NPHP3 and prenylated INPP5E. Targets NPHP3 to the ciliary membrane by releasing myristoylated NPHP3 from UNC119B cargo adapter into the cilium. Required for PKD1:PKD2 complex targeting from the trans-Golgi network to the cilium. This is ADP-ribosylation factor-like protein 3 (ARL3) from Pongo abelii (Sumatran orangutan).